A 426-amino-acid chain; its full sequence is Gamma-glutamyl phosphate reductase (426 aa).

Belongs to the gamma-glutamyl phosphate reductase family.

It is found in the cytoplasm. It catalyses the reaction L-glutamate 5-semialdehyde + phosphate + NADP(+) = L-glutamyl 5-phosphate + NADPH + H(+). The protein operates within amino-acid biosynthesis; L-proline biosynthesis; L-glutamate 5-semialdehyde from L-glutamate: step 2/2. Catalyzes the NADPH-dependent reduction of L-glutamate 5-phosphate into L-glutamate 5-semialdehyde and phosphate. The product spontaneously undergoes cyclization to form 1-pyrroline-5-carboxylate. In Cupriavidus taiwanensis (strain DSM 17343 / BCRC 17206 / CCUG 44338 / CIP 107171 / LMG 19424 / R1) (Ralstonia taiwanensis (strain LMG 19424)), this protein is Gamma-glutamyl phosphate reductase.